The primary structure comprises 615 residues: 1-deoxy-D-xylulose-5-phosphate synthase (615 aa).

Residues histidine 72 and glycine 111–serine 113 each bind thiamine diphosphate. Position 142 (aspartate 142) interacts with Mg(2+). Thiamine diphosphate contacts are provided by residues glycine 143–alanine 144, asparagine 171, tyrosine 278, and glutamate 360. Residue asparagine 171 coordinates Mg(2+).

The protein belongs to the transketolase family. DXPS subfamily. Homodimer. The cofactor is Mg(2+). Requires thiamine diphosphate as cofactor.

It catalyses the reaction D-glyceraldehyde 3-phosphate + pyruvate + H(+) = 1-deoxy-D-xylulose 5-phosphate + CO2. Its pathway is metabolic intermediate biosynthesis; 1-deoxy-D-xylulose 5-phosphate biosynthesis; 1-deoxy-D-xylulose 5-phosphate from D-glyceraldehyde 3-phosphate and pyruvate: step 1/1. Functionally, catalyzes the acyloin condensation reaction between C atoms 2 and 3 of pyruvate and glyceraldehyde 3-phosphate to yield 1-deoxy-D-xylulose-5-phosphate (DXP). The chain is 1-deoxy-D-xylulose-5-phosphate synthase from Campylobacter jejuni (strain RM1221).